The following is a 270-amino-acid chain: Putative methylsterol monooxygenase DDB_G0269788 (270 aa).

Transmembrane regions (helical) follow at residues 31–51, 82–102, and 110–130; these read FIAH…CDFM, IFVQ…IGLS, and IPYL…YFYW. Positions 118–249 constitute a Fatty acid hydroxylase domain; it reads ACCFLIEDFY…FTYLDKIFGT (132 aa). The short motif at 132–136 is the Histidine box-1 element; sequence HRALH. The short motif at 145–149 is the Histidine box-2 element; the sequence is HKVHH. The short motif at 224 to 230 is the Histidine box-3 element; it reads FHDFHHE.

This sequence belongs to the sterol desaturase family. It depends on Fe cation as a cofactor.

The protein localises to the endoplasmic reticulum membrane. The catalysed reaction is 4,4-dimethyl-5alpha-cholest-7-en-3beta-ol + 6 Fe(II)-[cytochrome b5] + 3 O2 + 5 H(+) = 4alpha-carboxy-4beta-methyl-5alpha-cholest-7-ene-3beta-ol + 6 Fe(III)-[cytochrome b5] + 4 H2O. Its pathway is steroid biosynthesis; zymosterol biosynthesis; zymosterol from lanosterol: step 3/6. This chain is Putative methylsterol monooxygenase DDB_G0269788, found in Dictyostelium discoideum (Social amoeba).